The following is a 238-amino-acid chain: DNA repair protein RAD59 (238 aa).

It belongs to the RAD52 family. In terms of assembly, interacts with RAD51 and RAD52.

Its subcellular location is the nucleus. Functionally, involved in the repair of double-strand breaks in DNA during vegetative growth via recombination and single-strand annealing. Anneals complementary single-stranded DNA. This Saccharomyces cerevisiae (strain ATCC 204508 / S288c) (Baker's yeast) protein is DNA repair protein RAD59 (RAD59).